Reading from the N-terminus, the 473-residue chain is Photosystem II CP43 reaction center protein (473 aa).

A propeptide spanning residues 1-14 is cleaved from the precursor; sequence MKTLYSLRRYYPVE. Residue Thr-15 is modified to N-acetylthreonine. A Phosphothreonine modification is found at Thr-15. The next 5 membrane-spanning stretches (helical) occupy residues 69–93, 134–155, 178–200, 255–275, and 291–312; these read LFEV…PHLA, LIGP…KDKN, KASF…REIT, KPFA…LSYS, and WFNN…ASQA. Glu-367 is a binding site for [CaMn4O5] cluster. The chain crosses the membrane as a helical span at residues 447 to 471; it reads RARAAAAGFEKGIDRDSEPVLSMTP.

It belongs to the PsbB/PsbC family. PsbC subfamily. As to quaternary structure, PSII is composed of 1 copy each of membrane proteins PsbA, PsbB, PsbC, PsbD, PsbE, PsbF, PsbH, PsbI, PsbJ, PsbK, PsbL, PsbM, PsbT, PsbX, PsbY, PsbZ, Psb30/Ycf12, at least 3 peripheral proteins of the oxygen-evolving complex and a large number of cofactors. It forms dimeric complexes. Requires Binds multiple chlorophylls and provides some of the ligands for the Ca-4Mn-5O cluster of the oxygen-evolving complex. It may also provide a ligand for a Cl- that is required for oxygen evolution. PSII binds additional chlorophylls, carotenoids and specific lipids. as cofactor.

The protein resides in the plastid. It is found in the chloroplast thylakoid membrane. One of the components of the core complex of photosystem II (PSII). It binds chlorophyll and helps catalyze the primary light-induced photochemical processes of PSII. PSII is a light-driven water:plastoquinone oxidoreductase, using light energy to abstract electrons from H(2)O, generating O(2) and a proton gradient subsequently used for ATP formation. In Anthoceros angustus (Hornwort), this protein is Photosystem II CP43 reaction center protein.